The chain runs to 475 residues: UDP-N-acetylmuramate--L-alanine ligase (475 aa).

125-131 is an ATP binding site; sequence GTHGKTS.

It belongs to the MurCDEF family.

The protein resides in the cytoplasm. The enzyme catalyses UDP-N-acetyl-alpha-D-muramate + L-alanine + ATP = UDP-N-acetyl-alpha-D-muramoyl-L-alanine + ADP + phosphate + H(+). Its pathway is cell wall biogenesis; peptidoglycan biosynthesis. Cell wall formation. The sequence is that of UDP-N-acetylmuramate--L-alanine ligase from Mycolicibacterium gilvum (strain PYR-GCK) (Mycobacterium gilvum (strain PYR-GCK)).